The sequence spans 59 residues: Large ribosomal subunit protein bL32c (59 aa).

The segment at 37–59 (SRSFSRGNEHPKPKGFSGQQANK) is disordered.

The protein belongs to the bacterial ribosomal protein bL32 family.

Its subcellular location is the plastid. The protein localises to the chloroplast. In Zea mays (Maize), this protein is Large ribosomal subunit protein bL32c (rpl32).